The primary structure comprises 426 residues: Glutamate-1-semialdehyde 2,1-aminomutase (426 aa).

At lysine 263 the chain carries N6-(pyridoxal phosphate)lysine.

The protein belongs to the class-III pyridoxal-phosphate-dependent aminotransferase family. HemL subfamily. In terms of assembly, homodimer. Requires pyridoxal 5'-phosphate as cofactor.

It is found in the cytoplasm. The catalysed reaction is (S)-4-amino-5-oxopentanoate = 5-aminolevulinate. It participates in porphyrin-containing compound metabolism; protoporphyrin-IX biosynthesis; 5-aminolevulinate from L-glutamyl-tRNA(Glu): step 2/2. The polypeptide is Glutamate-1-semialdehyde 2,1-aminomutase (Caldicellulosiruptor bescii (strain ATCC BAA-1888 / DSM 6725 / KCTC 15123 / Z-1320) (Anaerocellum thermophilum)).